Here is a 128-residue protein sequence, read N- to C-terminus: Fluoride-specific ion channel FluC (128 aa).

Helical transmembrane passes span 3–23 (FTTI…RSFT), 34–54 (LSFP…IGFL), 65–85 (INLK…FSTF), and 102–122 (FLNI…GFWI). Na(+) contacts are provided by Gly-77 and Thr-80.

The protein belongs to the fluoride channel Fluc/FEX (TC 1.A.43) family.

The protein resides in the cell inner membrane. The catalysed reaction is fluoride(in) = fluoride(out). Its activity is regulated as follows. Na(+) is not transported, but it plays an essential structural role and its presence is essential for fluoride channel function. Its function is as follows. Fluoride-specific ion channel. Important for reducing fluoride concentration in the cell, thus reducing its toxicity. The chain is Fluoride-specific ion channel FluC from Campylobacter fetus subsp. fetus (strain 82-40).